A 545-amino-acid chain; its full sequence is CTP synthase (545 aa).

The segment at 1–266 (MTTNYIFVTG…DDYICKRFSL (266 aa)) is amidoligase domain. Ser-14 contacts CTP. Residue Ser-14 participates in UTP binding. Residues 15–20 (SLGKGI) and Asp-72 contribute to the ATP site. The Mg(2+) site is built by Asp-72 and Glu-140. Residues 147–149 (DIE), 187–192 (KTKPTQ), and Lys-223 contribute to the CTP site. UTP contacts are provided by residues 187–192 (KTKPTQ) and Lys-223. 239–241 (KDV) is a binding site for ATP. Positions 291-542 (TIGMVGKYIE…VKAASEYQKR (252 aa)) constitute a Glutamine amidotransferase type-1 domain. Gly-352 is an L-glutamine binding site. Catalysis depends on Cys-379, which acts as the Nucleophile; for glutamine hydrolysis. L-glutamine is bound by residues 380-383 (LGMQ), Glu-403, and Arg-470. Active-site residues include His-515 and Glu-517.

It belongs to the CTP synthase family. Homotetramer.

The enzyme catalyses UTP + L-glutamine + ATP + H2O = CTP + L-glutamate + ADP + phosphate + 2 H(+). The catalysed reaction is L-glutamine + H2O = L-glutamate + NH4(+). It catalyses the reaction UTP + NH4(+) + ATP = CTP + ADP + phosphate + 2 H(+). Its pathway is pyrimidine metabolism; CTP biosynthesis via de novo pathway; CTP from UDP: step 2/2. Allosterically activated by GTP, when glutamine is the substrate; GTP has no effect on the reaction when ammonia is the substrate. The allosteric effector GTP functions by stabilizing the protein conformation that binds the tetrahedral intermediate(s) formed during glutamine hydrolysis. Inhibited by the product CTP, via allosteric rather than competitive inhibition. Functionally, catalyzes the ATP-dependent amination of UTP to CTP with either L-glutamine or ammonia as the source of nitrogen. Regulates intracellular CTP levels through interactions with the four ribonucleotide triphosphates. The chain is CTP synthase from Cronobacter sakazakii (strain ATCC BAA-894) (Enterobacter sakazakii).